A 369-amino-acid chain; its full sequence is Bi-functional coumaroyl CoA and feruloyl CoA ortho-hydroxylase Diox2 (369 aa).

Residues 215-318 (GSRRVNLNYY…RISVPLFVNP (104 aa)) enclose the Fe2OG dioxygenase domain. Tyr-224 serves as a coordination point for 2-oxoglutarate. His-239, Asp-241, and His-299 together coordinate Fe cation. 2-oxoglutarate is bound by residues Arg-309 and Ser-311.

The protein belongs to the iron/ascorbate-dependent oxidoreductase family. L-ascorbate is required as a cofactor. Fe(2+) serves as cofactor.

It carries out the reaction (E)-4-coumaroyl-CoA + 2-oxoglutarate + O2 = (E)-2,4-dihydroxycinnamoyl-CoA + succinate + CO2. The enzyme catalyses (E)-feruloyl-CoA + 2-oxoglutarate + O2 = (E)-6-hydroxyferuloyl-CoA + succinate + CO2. Its pathway is phenylpropanoid metabolism. Functionally, 2-oxoglutarate (OG)- and Fe(II)-dependent dioxygenase (2OGD) involved in scopoletin and umbelliferone biosynthesis. Converts feruloyl CoA into 6'-hydroxyferuloyl CoA, and p-coumaroyl CoA into 2,4-dihydroxycinnamoyl-CoA. This chain is Bi-functional coumaroyl CoA and feruloyl CoA ortho-hydroxylase Diox2, found in Ruta graveolens (Common rue).